Consider the following 191-residue polypeptide: UPF0302 protein SA1295 (191 aa).

It belongs to the UPF0302 family.

This Staphylococcus aureus (strain N315) protein is UPF0302 protein SA1295.